The sequence spans 149 residues: Probable flagellum biosynthesis repressor protein FlbT (149 aa).

It belongs to the FlbT family.

Functionally, has a post-transcriptional repressor function in flagellum biogenesis. Associates with the 5'-UTR of fljK mRNA and promotes its degradation. This Sinorhizobium medicae (strain WSM419) (Ensifer medicae) protein is Probable flagellum biosynthesis repressor protein FlbT.